Reading from the N-terminus, the 130-residue chain is Cystatin (130 aa).

Residues 1–19 (MEWKIVVPLLAVAFTVANA) form the signal peptide. A Secondary area of contact motif is present at residues 67–71 (QVVSG). 2 disulfide bridges follow: cysteine 85/cysteine 94 and cysteine 108/cysteine 128.

It belongs to the cystatin family. In terms of tissue distribution, ubiquitous expression including brain, white muscle, heart, gill, kidney, spleen, liver and skin with the highest and lowest level in brain and gill, respectively.

It localises to the secreted. In terms of biological role, cysteine proteinase inhibitor. The sequence is that of Cystatin from Oncorhynchus keta (Chum salmon).